A 367-amino-acid polypeptide reads, in one-letter code: Heme A synthase (367 aa).

5 consecutive transmembrane segments (helical) span residues 25–45 (ALRFWLGFVLLALFCLVLVGG), 111–131 (LIARAIGVIFALPLIYFWLTG), 139–159 (WPLVGILALGGLQGGIGWWMV), 174–194 (LATHLVMACLIFAGCMWIMRG), and 210–230 (GFAAAIAIFSLFQIYLGALVA). Residue His-274 coordinates heme. Transmembrane regions (helical) follow at residues 276-296 (IGAYTLFALTLINMVIALRAA), 305-325 (AILLFVLVTLQAAIGIATLLM), and 327-347 (VPLHWGLLHQAGALVVFGFAV). His-335 provides a ligand contact to heme.

The protein belongs to the COX15/CtaA family. Type 2 subfamily. As to quaternary structure, interacts with CtaB. Heme b is required as a cofactor.

The protein resides in the cell membrane. The enzyme catalyses Fe(II)-heme o + 2 A + H2O = Fe(II)-heme a + 2 AH2. Its pathway is porphyrin-containing compound metabolism; heme A biosynthesis; heme A from heme O: step 1/1. In terms of biological role, catalyzes the conversion of heme O to heme A by two successive hydroxylations of the methyl group at C8. The first hydroxylation forms heme I, the second hydroxylation results in an unstable dihydroxymethyl group, which spontaneously dehydrates, resulting in the formyl group of heme A. In Rhizobium johnstonii (strain DSM 114642 / LMG 32736 / 3841) (Rhizobium leguminosarum bv. viciae), this protein is Heme A synthase.